A 94-amino-acid polypeptide reads, in one-letter code: Co-chaperonin GroES (94 aa).

It belongs to the GroES chaperonin family. In terms of assembly, heptamer of 7 subunits arranged in a ring. Interacts with the chaperonin GroEL.

It is found in the cytoplasm. Functionally, together with the chaperonin GroEL, plays an essential role in assisting protein folding. The GroEL-GroES system forms a nano-cage that allows encapsulation of the non-native substrate proteins and provides a physical environment optimized to promote and accelerate protein folding. GroES binds to the apical surface of the GroEL ring, thereby capping the opening of the GroEL channel. The sequence is that of Co-chaperonin GroES from Ligilactobacillus salivarius (strain UCC118) (Lactobacillus salivarius).